Consider the following 287-residue polypeptide: Putative sugar uptake protein spyM18_2243 (287 aa).

10 helical membrane passes run 4–26, 33–50, 55–72, 85–107, 117–134, 154–171, 181–200, 207–229, 234–256, and 268–285; these read IFYA…KIGG, LGMT…WLIV, TLQL…WSIG, VSVA…GVLV, FVVG…FYFS, FRAL…AVLF, SVIL…FMSF, YVIK…LLAA, LAIA…ILFL, and VVTG…LGVV.

The protein belongs to the GRP transporter (TC 2.A.7.5) family.

Its subcellular location is the cell membrane. The polypeptide is Putative sugar uptake protein spyM18_2243 (Streptococcus pyogenes serotype M18 (strain MGAS8232)).